The primary structure comprises 353 residues: N6-methyladenosine RNA demethylase ALKB1 (353 aa).

The region spanning 223-352 (IAQAAIVNFY…RINLNVRQMR (130 aa)) is the Fe2OG dioxygenase domain. H241, D243, and H308 together coordinate Fe cation. R343 provides a ligand contact to 2-oxoglutarate.

The protein belongs to the alkB family. The cofactor is Fe(2+).

Its subcellular location is the cytoplasm. It localises to the P-body. The catalysed reaction is an N(6)-methyladenosine in mRNA + 2-oxoglutarate + O2 = an adenosine in mRNA + formaldehyde + succinate + CO2. Its function is as follows. RNA demethylase that regulates the stability of mRNAs through an m(6)A-dependent manner. M6A is a modification present at internal sites of mRNAs and some non-coding RNAs and plays a role in mRNA stability and processing. Plays a role in pathogenicity towards plant host. The protein is N6-methyladenosine RNA demethylase ALKB1 of Pyricularia oryzae (strain 70-15 / ATCC MYA-4617 / FGSC 8958) (Rice blast fungus).